A 227-amino-acid chain; its full sequence is Prolactin (227 aa).

Positions 1–28 (MNIKGSPWKGSLLLLLVSNLLLCQNVAP) are cleaved as a signal peptide. A disulfide bond links Cys-32 and Cys-39. Ser-54 carries the post-translational modification Phosphoserine. Asn-59 is a glycosylation site (N-linked (GlcNAc...) asparagine). 2 positions are modified to phosphoserine: Ser-62 and Ser-118. Intrachain disulfides connect Cys-86–Cys-202 and Cys-219–Cys-227.

The protein belongs to the somatotropin/prolactin family. Interacts with PRLR.

The protein resides in the secreted. Prolactin acts primarily on the mammary gland by promoting lactation. The polypeptide is Prolactin (PRL) (Macaca mulatta (Rhesus macaque)).